The following is a 273-amino-acid chain: ATP synthase subunit delta (273 aa).

It belongs to the ATPase delta chain family. F-type ATPases have 2 components, F(1) - the catalytic core - and F(0) - the membrane proton channel. F(1) has five subunits: alpha(3), beta(3), gamma(1), delta(1), epsilon(1). F(0) has three main subunits: a(1), b(2) and c(10-14). The alpha and beta chains form an alternating ring which encloses part of the gamma chain. F(1) is attached to F(0) by a central stalk formed by the gamma and epsilon chains, while a peripheral stalk is formed by the delta and b chains.

It is found in the cell membrane. Functionally, f(1)F(0) ATP synthase produces ATP from ADP in the presence of a proton or sodium gradient. F-type ATPases consist of two structural domains, F(1) containing the extramembraneous catalytic core and F(0) containing the membrane proton channel, linked together by a central stalk and a peripheral stalk. During catalysis, ATP synthesis in the catalytic domain of F(1) is coupled via a rotary mechanism of the central stalk subunits to proton translocation. This protein is part of the stalk that links CF(0) to CF(1). It either transmits conformational changes from CF(0) to CF(1) or is implicated in proton conduction. This chain is ATP synthase subunit delta, found in Corynebacterium diphtheriae (strain ATCC 700971 / NCTC 13129 / Biotype gravis).